We begin with the raw amino-acid sequence, 461 residues long: L-seryl-tRNA(Sec) selenium transferase (461 aa).

The residue at position 294 (Lys-294) is an N6-(pyridoxal phosphate)lysine.

The protein belongs to the SelA family. Requires pyridoxal 5'-phosphate as cofactor.

It is found in the cytoplasm. It carries out the reaction L-seryl-tRNA(Sec) + selenophosphate + H(+) = L-selenocysteinyl-tRNA(Sec) + phosphate. The protein operates within aminoacyl-tRNA biosynthesis; selenocysteinyl-tRNA(Sec) biosynthesis; selenocysteinyl-tRNA(Sec) from L-seryl-tRNA(Sec) (bacterial route): step 1/1. Its function is as follows. Converts seryl-tRNA(Sec) to selenocysteinyl-tRNA(Sec) required for selenoprotein biosynthesis. The protein is L-seryl-tRNA(Sec) selenium transferase of Actinobacillus pleuropneumoniae serotype 7 (strain AP76).